The chain runs to 141 residues: Putative pre-16S rRNA nuclease (141 aa).

Belongs to the YqgF nuclease family.

It is found in the cytoplasm. In terms of biological role, could be a nuclease involved in processing of the 5'-end of pre-16S rRNA. This Coxiella burnetii (strain CbuK_Q154) (Coxiella burnetii (strain Q154)) protein is Putative pre-16S rRNA nuclease.